A 1744-amino-acid chain; its full sequence is Tensin-1 (1744 aa).

Positions 15–55 (SPAVNYELPSPGQSITKQVDTPDATRSPRGGQAHRKASRSM) are disordered. In terms of domain architecture, Phosphatase tensin-type spans 58–230 (TAAMESSCEL…HYFSGLLSGS (173 aa)). A C2 tensin-type domain is found at 235–361 (NKPLFLHHVI…GKVEFVFSYG (127 aa)). Disordered stretches follow at residues 467-505 (TLSVSSDSGNSTASTKTDRTDEPGAPGAPTGHAVLSPEE), 569-589 (DELPNQDGHSVGSLGTLSSLD), 666-686 (AQEHLAGYPQRQPASTSPAWL), 724-797 (PQAP…APSR), 934-956 (GSQQLLVSSPPSPTAPAQSQLPH), 982-1077 (RVAG…PGLA), and 1156-1437 (VPSP…GSAV). Positions 468–481 (LSVSSDSGNSTAST) are enriched in polar residues. The span at 580–589 (GSLGTLSSLD) shows a compositional bias: low complexity. Positions 728 to 753 (ARSTSSREAVQRGLNSWQQQGGSRPP) are enriched in polar residues. Residues 763–773 (SHSPSLSSCSP) are compositionally biased toward low complexity. Residues 774-783 (QPSPLQPMPP) are compositionally biased toward pro residues. Basic and acidic residues-rich tracts occupy residues 1004–1014 (TPSDSHYEKSS) and 1041–1054 (RPKEPHLHSYKEAF). The segment covering 1060–1069 (ASPSSLTSGG) has biased composition (polar residues). 2 stretches are compositionally biased toward low complexity: residues 1156 to 1169 (VPSPVSTSSPIHSV) and 1208 to 1220 (SAHSSYQTSSPSS). Composition is skewed to polar residues over residues 1344–1355 (LSRQSSASGYQP), 1370–1380 (GTSTPHSSSPD), and 1405–1420 (ERSNSLPNYATVNGKA). The span at 1421–1435 (SSPLSSGMSSPSSGS) shows a compositional bias: low complexity. An SH2 domain is found at 1472–1581 (WYKPDISREQ…ALPCKLVIPD (110 aa)). In terms of domain architecture, PTB spans 1607 to 1743 (ACNVLFINSV…SRVMLGSGQK (137 aa)).

This sequence belongs to the PTEN phosphatase protein family. As to quaternary structure, binds to actin filaments. Interacts with phosphotyrosine-containing proteins. Tyrosine phosphorylated. In terms of tissue distribution, heart, gizzard, lung and skeletal muscle.

The protein localises to the cell surface. It is found in the cell junction. It localises to the focal adhesion. Its subcellular location is the cytoplasm. The protein resides in the cytoskeleton. Functionally, may act as a protein phosphatase and/or a lipid phosphatase. Involved in fibrillar adhesion formation. Plays a role in cell polarization and migration. May be involved in cartilage development and in linking signal transduction pathways to the cytoskeleton. In Gallus gallus (Chicken), this protein is Tensin-1 (TNS1).